A 325-amino-acid polypeptide reads, in one-letter code: Elongation factor P--(R)-beta-lysine ligase (325 aa).

Residue 76–78 participates in substrate binding; the sequence is SPE. Residues 100-102 and Asn-109 each bind ATP; that span reads RNE. Substrate is bound at residue Tyr-118. Residue 244–245 coordinates ATP; that stretch reads EL. Glu-251 contributes to the substrate binding site. Gly-300 provides a ligand contact to ATP.

This sequence belongs to the class-II aminoacyl-tRNA synthetase family. EpmA subfamily. In terms of assembly, homodimer.

The catalysed reaction is D-beta-lysine + L-lysyl-[protein] + ATP = N(6)-((3R)-3,6-diaminohexanoyl)-L-lysyl-[protein] + AMP + diphosphate + H(+). In terms of biological role, with EpmB is involved in the beta-lysylation step of the post-translational modification of translation elongation factor P (EF-P) on 'Lys-34'. Catalyzes the ATP-dependent activation of (R)-beta-lysine produced by EpmB, forming a lysyl-adenylate, from which the beta-lysyl moiety is then transferred to the epsilon-amino group of EF-P 'Lys-34'. This chain is Elongation factor P--(R)-beta-lysine ligase, found in Salmonella gallinarum (strain 287/91 / NCTC 13346).